A 119-amino-acid chain; its full sequence is Putative yippee-like protein Os10g0369500 (119 aa).

The 98-residue stretch at 21–118 folds into the Yippee domain; that stretch reads AVLKCRRCRV…LEKARMWKEA (98 aa). Zn(2+) contacts are provided by Cys-25, Cys-28, Cys-81, and Cys-84.

Belongs to the yippee family.

This Oryza sativa subsp. japonica (Rice) protein is Putative yippee-like protein Os10g0369500.